Consider the following 407-residue polypeptide: Shaggy-related protein kinase iota (407 aa).

Over residues M1–L19 the composition is skewed to low complexity. The segment at M1–D23 is disordered. A2 carries the post-translational modification N-acetylalanine. One can recognise a Protein kinase domain in the interval Y70–F354. Residues V76–V84 and K99 contribute to the ATP site. D195 serves as the catalytic Proton acceptor. Position 230 is a phosphotyrosine (Y230).

This sequence belongs to the protein kinase superfamily. CMGC Ser/Thr protein kinase family. GSK-3 subfamily. In terms of assembly, binds to KIB1. Interacts with BSK6. In terms of processing, autophosphorylated mainly on threonine and serine residues.

The catalysed reaction is L-seryl-[protein] + ATP = O-phospho-L-seryl-[protein] + ADP + H(+). It carries out the reaction L-threonyl-[protein] + ATP = O-phospho-L-threonyl-[protein] + ADP + H(+). In terms of biological role, phosphorylates BSK1, BSK3, BSK5, BSK6, BSK8 and BSK11 in vitro. May mediate extracellular signals to regulate transcription in differentiating cells. In Arabidopsis thaliana (Mouse-ear cress), this protein is Shaggy-related protein kinase iota (ASK9).